A 237-amino-acid chain; its full sequence is MIRAHFQFKETITTILAEEQAWIEVAKEAMITARQDLERYIARDPFFQMTLEPYTPDHGPSIAERMAGAAGGAGVGPMAAVAGTIAAIGVGAMARAGAAFGVIDNGGDIALITDRPLRIGIYAGTSPISGKVAFVLPPQPAVYGVCTSSATVGPSLSFGVADAVTVFASDPSVADAWATALCNQVRPGVSTAFDSLAGSGVDGAVAILGGEVQRWGSVPPMVSATVDENLITAGELY.

The protein belongs to the UPF0280 family.

In Methanosphaerula palustris (strain ATCC BAA-1556 / DSM 19958 / E1-9c), this protein is UPF0280 protein Mpal_1292.